The primary structure comprises 204 residues: Uracil-DNA glycosylase (204 aa).

D47 acts as the Proton acceptor in catalysis.

It belongs to the uracil-DNA glycosylase (UDG) superfamily. UNG family.

Its subcellular location is the host nucleus. The catalysed reaction is Hydrolyzes single-stranded DNA or mismatched double-stranded DNA and polynucleotides, releasing free uracil.. In terms of biological role, excises uracil residues from the DNA which can arise as a result of misincorporation of dUMP residues by DNA polymerase or deamination of cytosines. Therefore may reduce deleterious uracil incorporation into the viral genome, particularly in terminally differentiated cells which lack DNA repair enzymes. The polypeptide is Uracil-DNA glycosylase (UL2) (Bos taurus (Bovine)).